The following is a 246-amino-acid chain: tRNA (guanine-N(1)-)-methyltransferase (246 aa).

Residue glycine 114 coordinates S-adenosyl-L-methionine.

Belongs to the RNA methyltransferase TrmD family. As to quaternary structure, homodimer.

Its subcellular location is the cytoplasm. The catalysed reaction is guanosine(37) in tRNA + S-adenosyl-L-methionine = N(1)-methylguanosine(37) in tRNA + S-adenosyl-L-homocysteine + H(+). Functionally, specifically methylates guanosine-37 in various tRNAs. In Novosphingobium aromaticivorans (strain ATCC 700278 / DSM 12444 / CCUG 56034 / CIP 105152 / NBRC 16084 / F199), this protein is tRNA (guanine-N(1)-)-methyltransferase.